Reading from the N-terminus, the 31-residue chain is Cytochrome b6-f complex subunit 6 (31 aa).

Residues 4–24 (ITSYFGFLLAALTITSALLIG) form a helical membrane-spanning segment.

Belongs to the PetL family. As to quaternary structure, the 4 large subunits of the cytochrome b6-f complex are cytochrome b6, subunit IV (17 kDa polypeptide, PetD), cytochrome f and the Rieske protein, while the 4 small subunits are PetG, PetL, PetM and PetN. The complex functions as a dimer.

Its subcellular location is the plastid. It localises to the chloroplast thylakoid membrane. Functionally, component of the cytochrome b6-f complex, which mediates electron transfer between photosystem II (PSII) and photosystem I (PSI), cyclic electron flow around PSI, and state transitions. PetL is important for photoautotrophic growth as well as for electron transfer efficiency and stability of the cytochrome b6-f complex. This is Cytochrome b6-f complex subunit 6 from Magnolia grandiflora (Southern magnolia).